The primary structure comprises 477 residues: UDP-N-acetylmuramate--L-alanine ligase (477 aa).

112–118 provides a ligand contact to ATP; that stretch reads GTHGKTT.

It belongs to the MurCDEF family.

The protein resides in the cytoplasm. It catalyses the reaction UDP-N-acetyl-alpha-D-muramate + L-alanine + ATP = UDP-N-acetyl-alpha-D-muramoyl-L-alanine + ADP + phosphate + H(+). It participates in cell wall biogenesis; peptidoglycan biosynthesis. In terms of biological role, cell wall formation. The chain is UDP-N-acetylmuramate--L-alanine ligase from Verminephrobacter eiseniae (strain EF01-2).